The chain runs to 695 residues: Follicle-stimulating hormone receptor (695 aa).

An N-terminal signal peptide occupies residues 1–17 (MALLLVSLLAFMSLGSG). Intrachain disulfides connect Cys18/Cys25 and Cys23/Cys32. The 29-residue stretch at 18 to 46 (CHHRLCHCSNRVFLCQESKVTEIPSDLPR) folds into the LRRNT domain. Residues 18 to 366 (CHHRLCHCSN…EDIMGYNILR (349 aa)) lie on the Extracellular side of the membrane. 9 LRR repeats span residues 49-72 (VELRFVLTKLRVIPKGAFSGFGDL), 73-97 (EKIEISQNDALEVIEADVFSNLPNL), 98-118 (HEIRIEKANNLLYINPEAFQN), 119-143 (LPNLRYLLISNTGIRHLPAVHKIQS), 144-169 (LQKVLLDIQDNINIHTVERNSFLGLS), 170-192 (SESVILRLNKNGIQEIQNCAFNG), 193-216 (TQLDDLNLSDNDNLEELPNGVFQG), 217-240 (ASGPVILDISRTRINSLPSHGLEN), and 241-259 (LKKLRARSTYNLKKLPSLE). N-linked (GlcNAc...) asparagine glycosylation is found at Asn191 and Asn199. 4 cysteine pairs are disulfide-bonded: Cys275–Cys346, Cys276–Cys292, Cys276–Cys356, and Cys292–Cys338. Asn293 is a glycosylation site (N-linked (GlcNAc...) asparagine). A Sulfotyrosine modification is found at Tyr335. A helical transmembrane segment spans residues 367–387 (VLIWFISILAITGNVAVLVVL). At 388–398 (TTSQYKLTVPR) the chain is on the cytoplasmic side. A helical membrane pass occupies residues 399–421 (FLMCNLAFADLCIGIYLLLIASV). Over 422–443 (DVHTRTLYHNYAIDWQTGAGCA) the chain is Extracellular. A disulfide bridge connects residues Cys442 and Cys517. The helical transmembrane segment at 444-465 (DCWLFTVFASELSVYTLTAITL) threads the bilayer. At 466-485 (ERWHTITHAMQLDCKVQLRH) the chain is on the cytoplasmic side. A helical transmembrane segment spans residues 486 to 508 (AASIMVIGWIFSSAAALFPIFGV). The Extracellular portion of the chain corresponds to 509-528 (SSYMKVSICLPMDIDSPLSQ). The chain crosses the membrane as a helical span at residues 529–550 (LYVMFLLVLNVLAFVVICGCYL). Over 551–573 (HIYLTVRNPNIVSSASDTRIAKR) the chain is Cytoplasmic. A helical transmembrane segment spans residues 574-597 (MATLIFTDFLCMAPISFFAISASL). Over 598–608 (KVPLITVSKAK) the chain is Extracellular. A helical transmembrane segment spans residues 609-630 (ILLVLFYPINSCANPFLYAIFT). At 631–695 (KNFRRDLFIL…LAPLNHLAQN (65 aa)) the chain is on the cytoplasmic side. The tract at residues 658 to 677 (TSSTAHNSHPRNGHSSSVSR) is disordered.

The protein belongs to the G-protein coupled receptor 1 family. FSH/LSH/TSH subfamily. In terms of assembly, homotrimer. Functions as a homotrimer binding the FSH hormone heterodimer composed of CGA and FSHB. Interacts with ARRB2. Interacts with APPL2; interaction is independent of follicle stimulating hormone stimulation. N-glycosylated; indirectly required for FSH-binding, possibly via a conformational change that allows high affinity binding of hormone. Post-translationally, sulfated.

It localises to the cell membrane. G protein-coupled receptor for follitropin, the follicle-stimulating hormone. Through cAMP production activates the downstream PI3K-AKT and ERK1/ERK2 signaling pathways. The chain is Follicle-stimulating hormone receptor (FSHR) from Cavia porcellus (Guinea pig).